A 296-amino-acid chain; its full sequence is NH(3)-dependent NAD(+) synthetase (296 aa).

Residue 30-37 coordinates ATP; the sequence is GVSGGLDS. Residue Asp36 coordinates Mg(2+). Arg157 provides a ligand contact to deamido-NAD(+). Glu182 provides a ligand contact to Mg(2+). Residues Lys190 and Asp197 each coordinate deamido-NAD(+). ATP-binding residues include Lys206 and Ser228.

Belongs to the NAD synthetase family. As to quaternary structure, homodimer.

The enzyme catalyses deamido-NAD(+) + NH4(+) + ATP = AMP + diphosphate + NAD(+) + H(+). It functions in the pathway cofactor biosynthesis; NAD(+) biosynthesis; NAD(+) from deamido-NAD(+) (ammonia route): step 1/1. Its function is as follows. Catalyzes the ATP-dependent amidation of deamido-NAD to form NAD. Uses ammonia as a nitrogen source. In Coprothermobacter proteolyticus (strain ATCC 35245 / DSM 5265 / OCM 4 / BT), this protein is NH(3)-dependent NAD(+) synthetase.